We begin with the raw amino-acid sequence, 499 residues long: Long chain base biosynthesis protein 2b (499 aa).

The chain crosses the membrane as a helical span at residues valine 5–histidine 25. Lysine 322 carries the N6-(pyridoxal phosphate)lysine modification.

It belongs to the class-II pyridoxal-phosphate-dependent aminotransferase family. In terms of assembly, heterodimer with LCB1. Component of the serine palmitoyltransferase (SPT) complex, composed of LCB1 and LCB2. Pyridoxal 5'-phosphate serves as cofactor.

It is found in the endoplasmic reticulum membrane. The catalysed reaction is L-serine + hexadecanoyl-CoA + H(+) = 3-oxosphinganine + CO2 + CoA. It participates in lipid metabolism; sphingolipid metabolism. Its function is as follows. Serine palmitoyltransferase (SPT). The heterodimer formed with LCB1 constitutes the catalytic core. The chain is Long chain base biosynthesis protein 2b from Oryza sativa subsp. japonica (Rice).